The primary structure comprises 161 residues: Large ribosomal subunit protein uL16 (161 aa).

Belongs to the universal ribosomal protein uL16 family.

The polypeptide is Large ribosomal subunit protein uL16 (Methanosphaera stadtmanae (strain ATCC 43021 / DSM 3091 / JCM 11832 / MCB-3)).